Reading from the N-terminus, the 92-residue chain is Putative defensin-like protein 225 (92 aa).

Residues 1 to 26 (MKYGVLFMVSCGVMFLILSHVEEVEA) form the signal peptide. Intrachain disulfides connect C32–C92, C42–C70, and C68–C88.

This sequence belongs to the DEFL family.

It localises to the secreted. In Arabidopsis thaliana (Mouse-ear cress), this protein is Putative defensin-like protein 225 (SCRL1).